The sequence spans 185 residues: Ribosome-recycling factor (185 aa).

The protein belongs to the RRF family.

It localises to the cytoplasm. Its function is as follows. Responsible for the release of ribosomes from messenger RNA at the termination of protein biosynthesis. May increase the efficiency of translation by recycling ribosomes from one round of translation to another. In Yersinia enterocolitica serotype O:8 / biotype 1B (strain NCTC 13174 / 8081), this protein is Ribosome-recycling factor.